A 400-amino-acid chain; its full sequence is Subtilisin-like protease 7 (400 aa).

An N-terminal signal peptide occupies residues 1 to 20 (MGFITKAIPLALAAASVING). A propeptide spanning residues 21-119 (AEIMETRAGV…IERDARVQIN (99 aa)) is cleaved from the precursor. An Inhibitor I9 domain is found at 36 to 118 (KYIVVMNDGM…YIERDARVQI (83 aa)). Asn-58 carries an N-linked (GlcNAc...) asparagine glycan. The 272-residue stretch at 129–400 (SWGLARVGSK…SKLINNGSGM (272 aa)) folds into the Peptidase S8 domain. Residues Asp-161 and His-192 each act as charge relay system in the active site. Asn-222 and Asn-252 each carry an N-linked (GlcNAc...) asparagine glycan. The active-site Charge relay system is the Ser-346. Asn-396 carries N-linked (GlcNAc...) asparagine glycosylation.

It belongs to the peptidase S8 family.

The protein resides in the secreted. In terms of biological role, secreted subtilisin-like serine protease with keratinolytic activity that contributes to pathogenicity. This chain is Subtilisin-like protease 7 (SUB7), found in Trichophyton verrucosum (Cattle ringworm fungus).